The sequence spans 146 residues: 3-hydroxyacyl-[acyl-carrier-protein] dehydratase FabZ (146 aa).

Histidine 48 is a catalytic residue.

Belongs to the thioester dehydratase family. FabZ subfamily.

The protein resides in the cytoplasm. The catalysed reaction is a (3R)-hydroxyacyl-[ACP] = a (2E)-enoyl-[ACP] + H2O. Involved in unsaturated fatty acids biosynthesis. Catalyzes the dehydration of short chain beta-hydroxyacyl-ACPs and long chain saturated and unsaturated beta-hydroxyacyl-ACPs. The protein is 3-hydroxyacyl-[acyl-carrier-protein] dehydratase FabZ of Campylobacter lari (strain RM2100 / D67 / ATCC BAA-1060).